Reading from the N-terminus, the 333-residue chain is CMP-N-acetylneuraminate-beta-galactosamide-alpha-2,3-sialyltransferase 4 (333 aa).

At 1–8 (MTSKSHWK) the chain is on the cytoplasmic side. Residues 9–26 (LLALALVLVVVMVWYSIS) form a helical; Signal-anchor for type II membrane protein membrane-spanning segment. Over 27 to 333 (REDRYIEFFY…MGAVKNLTYF (307 aa)) the chain is Lumenal. Residues asparagine 61, asparagine 131, asparagine 310, and asparagine 329 are each glycosylated (N-linked (GlcNAc...) asparagine). A disulfide bridge links cysteine 120 with cysteine 273.

This sequence belongs to the glycosyltransferase 29 family. As to expression, broadly expressed among tissues with highest levels in the small intestine and colon.

Its subcellular location is the golgi apparatus. The protein localises to the golgi stack membrane. The catalysed reaction is a beta-D-galactosyl-(1-&gt;3)-N-acetyl-beta-D-galactosaminyl derivative + CMP-N-acetyl-beta-neuraminate = an N-acetyl-alpha-neuraminyl-(2-&gt;3)-beta-D-galactosyl-(1-&gt;3)-N-acetyl-beta-D-galactosaminyl derivative + CMP + H(+). The enzyme catalyses a beta-D-galactosyl-(1-&gt;3)-N-acetyl-alpha-D-galactosaminyl derivative + CMP-N-acetyl-beta-neuraminate = an N-acetyl-alpha-neuraminyl-(2-&gt;3)-beta-D-galactosyl-(1-&gt;3)-N-acetyl-alpha-D-galactosaminyl derivative + CMP + H(+). It carries out the reaction a beta-D-galactosyl-(1-&gt;4)-N-acetyl-beta-D-glucosaminyl derivative + CMP-N-acetyl-beta-neuraminate = an N-acetyl-alpha-neuraminyl-(2-&gt;3)-beta-D-galactosyl-(1-&gt;4)-N-acetyl-beta-D-glucosaminyl derivative + CMP + H(+). It catalyses the reaction a ganglioside GM1 (d18:1(4E)) + CMP-N-acetyl-beta-neuraminate = a ganglioside GD1a (d18:1(4E)) + CMP + H(+). The catalysed reaction is a ganglioside GA1 (d18:1(4E)) + CMP-N-acetyl-beta-neuraminate = a ganglioside GM1b (d18:1(4E)) + CMP + H(+). The enzyme catalyses a ganglioside GT1c (d18:1(4E)) + CMP-N-acetyl-beta-neuraminate = a ganglioside GQ1c (d18:1(4E)) + CMP + H(+). It carries out the reaction a neolactoside nLc4Cer + CMP-N-acetyl-beta-neuraminate = a neolactoside IV(3)-alpha-NeuAc-nLc4Cer + CMP + H(+). It catalyses the reaction a neolactoside nLc4Cer(d18:1(4E)) + CMP-N-acetyl-beta-neuraminate = a neolactoside IV(3)-alpha-NeuAc-nLc4Cer(d18:1(4E)) + CMP + H(+). The protein operates within protein modification; protein glycosylation. A beta-galactoside alpha2-3 sialyltransferase involved in terminal sialylation of glycoproteins and glycolipids. Catalyzes the transfer of sialic acid (N-acetyl-neuraminic acid; Neu5Ac) from the nucleotide sugar donor CMP-Neu5Ac onto acceptor Galbeta-(1-&gt;3)-GalNAc- and Galbeta-(1-&gt;4)-GlcNAc-terminated glycoconjugates through an alpha2-3 linkage. Plays a major role in hemostasis. Responsible for sialylation of plasma VWF/von Willebrand factor, preventing its recognition by asialoglycoprotein receptors (ASGPR) and subsequent clearance. Regulates ASGPR-mediated clearance of platelets. Participates in the biosynthesis of the sialyl Lewis X epitopes, both on O- and N-glycans, which are recognized by SELE/E-selectin, SELP/P-selectin and SELL/L-selectin. Essential for selectin-mediated rolling and adhesion of leukocytes during extravasation. Contributes to adhesion and transendothelial migration of neutrophils likely through terminal sialylation of CXCR2. In glycosphingolipid biosynthesis, sialylates GM1 and GA1 gangliosides to form GD1a and GM1b, respectively. Metabolizes brain c-series ganglioside GT1c forming GQ1c. Synthesizes ganglioside LM1 (IV3Neu5Ac-nLc4Cer), a major structural component of peripheral nerve myelin. This Mus musculus (Mouse) protein is CMP-N-acetylneuraminate-beta-galactosamide-alpha-2,3-sialyltransferase 4 (St3gal4).